A 120-amino-acid chain; its full sequence is MSRKIDLLDRRRARVRRAIRAAANGRPRLSVFRSSKQIYVQVIDDANGRTLAAASSLDKDLRARLKTGADKAAAAEVGKLVAERAKAAGVTKVIFDRSGYLYHGRVKALADAAREGGLDF.

The protein belongs to the universal ribosomal protein uL18 family. As to quaternary structure, part of the 50S ribosomal subunit; part of the 5S rRNA/L5/L18/L25 subcomplex. Contacts the 5S and 23S rRNAs.

This is one of the proteins that bind and probably mediate the attachment of the 5S RNA into the large ribosomal subunit, where it forms part of the central protuberance. This is Large ribosomal subunit protein uL18 from Methylobacterium nodulans (strain LMG 21967 / CNCM I-2342 / ORS 2060).